A 431-amino-acid chain; its full sequence is Nuclear envelope integral membrane protein 1 (431 aa).

The signal sequence occupies residues 1 to 29; the sequence is MAGEVEGEGCRVSWGVLVALLLLPLPSLC. A run of 5 helical transmembrane segments spans residues 151–171, 175–195, 206–226, 236–256, and 266–286; these read PRLFFVFLCGLLLFFYGDTLS, IFYYSTGITVGMLASMLILVF, PFVALLLGGWSVSIYVIQLVF, YWQYLLGYLGIVGFVSFAFCY, and SINILNWTLQLIGLLLMYISV. An a; required for its colocalization with lamins at the nuclear envelope region spans residues 176-287; the sequence is FYYSTGITVG…GLLLMYISVQ (112 aa). A Nuclear localization signal motif is present at residues 317-325; that stretch reads RKIKLKRGK. The b; required for interaction with ran stretch occupies residues 326 to 395; it reads PSPPRLLTEE…LTPNEVSVHE (70 aa). Positions 326–431 are interaction with banf1-a and banf1-b; the sequence is PSPPRLLTEE…IEPVLYQDLR (106 aa). The BAF-binding site (BBS); essential for interaction with banf1-a, banf1-b and ran stretch occupies residues 368 to 375; that stretch reads SRIQSPKR.

The protein belongs to the NEMP family. As to quaternary structure, homooligomer. Interacts with banf1-a and banf1-b. Interacts with ran-gtp. Phosphorylated.

It localises to the nucleus inner membrane. It is found in the nucleus envelope. Its function is as follows. In concert with ran, required for proper eye development. May be involved in the expression of early eye marker genes. Contributes to nuclear envelope stiffness in germ cells. Required for fertility. Essential for normal erythropoiesis. Required for efficient nuclear envelope opening and enucleation during the late stages of erythroblast maturation. The protein is Nuclear envelope integral membrane protein 1 (nemp1) of Xenopus tropicalis (Western clawed frog).